Here is a 176-residue protein sequence, read N- to C-terminus: NAD(P)H-quinone oxidoreductase subunit 6, chloroplastic (176 aa).

5 consecutive transmembrane segments (helical) span residues 10 to 30 (FLLVFLGSGLIVGGLGVVLLT), 32 to 52 (PIFSAFSLGLVLVCISLFFSL), 61 to 81 (AQLLIYVGAINVLILFAVMFM), 92 to 112 (LWTVGDGITSLVCTSIFISLI), and 152 to 172 (FFLPFELISIILLVSLIGAIA).

This sequence belongs to the complex I subunit 6 family. NDH is composed of at least 16 different subunits, 5 of which are encoded in the nucleus.

It localises to the plastid. It is found in the chloroplast thylakoid membrane. The catalysed reaction is a plastoquinone + NADH + (n+1) H(+)(in) = a plastoquinol + NAD(+) + n H(+)(out). It catalyses the reaction a plastoquinone + NADPH + (n+1) H(+)(in) = a plastoquinol + NADP(+) + n H(+)(out). Its function is as follows. NDH shuttles electrons from NAD(P)H:plastoquinone, via FMN and iron-sulfur (Fe-S) centers, to quinones in the photosynthetic chain and possibly in a chloroplast respiratory chain. The immediate electron acceptor for the enzyme in this species is believed to be plastoquinone. Couples the redox reaction to proton translocation, and thus conserves the redox energy in a proton gradient. The chain is NAD(P)H-quinone oxidoreductase subunit 6, chloroplastic (ndhG) from Oenothera argillicola (Appalachian evening primrose).